The chain runs to 217 residues: tRNA (guanine-N(7)-)-methyltransferase (217 aa).

Glu-44, Asp-69, Asp-96, and Asp-118 together coordinate S-adenosyl-L-methionine. Asp-118 is an active-site residue. Residue Lys-122 participates in substrate binding. Positions 124 to 129 (RHEKRR) are interaction with RNA. Substrate-binding positions include Asp-154 and 193-196 (TEYE).

Belongs to the class I-like SAM-binding methyltransferase superfamily. TrmB family.

It catalyses the reaction guanosine(46) in tRNA + S-adenosyl-L-methionine = N(7)-methylguanosine(46) in tRNA + S-adenosyl-L-homocysteine. Its pathway is tRNA modification; N(7)-methylguanine-tRNA biosynthesis. In terms of biological role, catalyzes the formation of N(7)-methylguanine at position 46 (m7G46) in tRNA. This is tRNA (guanine-N(7)-)-methyltransferase from Lactococcus lactis subsp. lactis (strain IL1403) (Streptococcus lactis).